The sequence spans 320 residues: Probable L,D-transpeptidase YcfS (320 aa).

An N-terminal signal peptide occupies residues M1 to A23. Residues K45–I90 form the LysM domain. The 140-residue stretch at E102–I241 folds into the L,D-TPase catalytic domain. Catalysis depends on H201, which acts as the Proton donor/acceptor. C217 serves as the catalytic Nucleophile.

The protein belongs to the YkuD family. In terms of assembly, interacts with DsbG.

It localises to the periplasm. It functions in the pathway cell wall biogenesis; peptidoglycan biosynthesis. Functionally, responsible, at least in part, for anchoring of the major outer membrane lipoprotein (Lpp, also known as the Braun lipoprotein) to the peptidoglycan via a meso-diaminopimelyl-L-Lys- bond on the terminal residue of Lpp. This chain is Probable L,D-transpeptidase YcfS (ycfS), found in Escherichia coli (strain K12).